Here is a 671-residue protein sequence, read N- to C-terminus: NADH-quinone oxidoreductase subunit G (671 aa).

One can recognise a 2Fe-2S ferredoxin-type domain in the interval 1-78; that stretch reads MIKLNIDGSE…GMVIHTDTPM (78 aa). The [2Fe-2S] cluster site is built by Cys-34, Cys-45, Cys-48, and Cys-62. The 4Fe-4S His(Cys)3-ligated-type domain maps to 78-117; it reads MVKKAREGVMEFLLINHPLDCPICDQGGECDLQDQAFRYG. Residues His-94, Cys-98, Cys-101, Cys-107, Cys-146, Cys-149, Cys-152, and Cys-196 each coordinate [4Fe-4S] cluster. The 57-residue stretch at 215 to 271 folds into the 4Fe-4S Mo/W bis-MGD-type domain; that stretch reads LKHTASIGVHDAEGSNIRIDSRGDEVMRILPRVNEEINEEWLSDKNRFSYDGLKYQR.

The protein belongs to the complex I 75 kDa subunit family. [2Fe-2S] cluster is required as a cofactor. It depends on [4Fe-4S] cluster as a cofactor.

It catalyses the reaction a quinone + NADH + 5 H(+)(in) = a quinol + NAD(+) + 4 H(+)(out). Functionally, NDH-1 shuttles electrons from NADH, via FMN and iron-sulfur (Fe-S) centers, to quinones in the respiratory chain. Couples the redox reaction to proton translocation (for every two electrons transferred, four hydrogen ions are translocated across the cytoplasmic membrane), and thus conserves the redox energy in a proton gradient. This chain is NADH-quinone oxidoreductase subunit G (nuoG), found in Rickettsia felis (strain ATCC VR-1525 / URRWXCal2) (Rickettsia azadi).